Reading from the N-terminus, the 252-residue chain is Pyrroloquinoline-quinone synthase (252 aa).

This sequence belongs to the PqqC family.

It carries out the reaction 6-(2-amino-2-carboxyethyl)-7,8-dioxo-1,2,3,4,7,8-hexahydroquinoline-2,4-dicarboxylate + 3 O2 = pyrroloquinoline quinone + 2 H2O2 + 2 H2O + H(+). The protein operates within cofactor biosynthesis; pyrroloquinoline quinone biosynthesis. In terms of biological role, ring cyclization and eight-electron oxidation of 3a-(2-amino-2-carboxyethyl)-4,5-dioxo-4,5,6,7,8,9-hexahydroquinoline-7,9-dicarboxylic-acid to PQQ. The sequence is that of Pyrroloquinoline-quinone synthase from Acinetobacter baumannii (strain AB307-0294).